The chain runs to 404 residues: Beta-ketoacyl-[acyl-carrier-protein] synthase III, chloroplastic (404 aa).

A chloroplast-targeting transit peptide spans 1 to 43 (MANASGFFTHPSIPNLRSRIHVPVRVSGSGFCVSNRFSKRVLC). Residues C179, H330, and N360 contribute to the active site.

This sequence belongs to the thiolase-like superfamily. FabH family.

Its subcellular location is the plastid. The protein localises to the chloroplast. The enzyme catalyses malonyl-[ACP] + acetyl-CoA + H(+) = 3-oxobutanoyl-[ACP] + CO2 + CoA. It participates in lipid metabolism; fatty acid biosynthesis. In terms of biological role, catalyzes the condensation reaction of fatty acid synthesis by the addition to an acyl acceptor of two carbons from malonyl-ACP. KAS III catalyzes the first condensation reaction which initiates fatty acid synthesis and may therefore play a role in governing the total rate of fatty acid production. Possesses both acetoacetyl-ACP synthase and acetyl transacylase activities. The chain is Beta-ketoacyl-[acyl-carrier-protein] synthase III, chloroplastic from Arabidopsis thaliana (Mouse-ear cress).